Consider the following 276-residue polypeptide: Undecaprenyl-diphosphatase 1 (276 aa).

7 consecutive transmembrane segments (helical) span residues 4-24 (ILIC…FLPV), 46-63 (TFDV…CWEY), 83-103 (FTLN…LFEK), 108-128 (VLFS…IILW), 187-207 (VATE…TLYE), 217-237 (VDSL…AFVC), and 252-272 (VFAW…YSGW).

This sequence belongs to the UppP family.

The protein localises to the cell inner membrane. The enzyme catalyses di-trans,octa-cis-undecaprenyl diphosphate + H2O = di-trans,octa-cis-undecaprenyl phosphate + phosphate + H(+). Its function is as follows. Catalyzes the dephosphorylation of undecaprenyl diphosphate (UPP). Confers resistance to bacitracin. The polypeptide is Undecaprenyl-diphosphatase 1 (Burkholderia lata (strain ATCC 17760 / DSM 23089 / LMG 22485 / NCIMB 9086 / R18194 / 383)).